The sequence spans 1024 residues: Beta-galactosidase (1024 aa).

Substrate is bound by residues asparagine 103 and aspartate 202. Aspartate 202 serves as a coordination point for Na(+). Mg(2+)-binding residues include glutamate 417, histidine 419, and glutamate 462. Substrate contacts are provided by residues glutamate 462 and 538–541 (EYAH). The active-site Proton donor is the glutamate 462. Catalysis depends on glutamate 538, which acts as the Nucleophile. Asparagine 598 contributes to the Mg(2+) binding site. Na(+) is bound by residues phenylalanine 602 and asparagine 605. The substrate site is built by asparagine 605 and tryptophan 1000.

This sequence belongs to the glycosyl hydrolase 2 family. Homotetramer. Requires Mg(2+) as cofactor. Na(+) is required as a cofactor.

It carries out the reaction Hydrolysis of terminal non-reducing beta-D-galactose residues in beta-D-galactosides.. This is Beta-galactosidase from Escherichia coli (strain SMS-3-5 / SECEC).